The chain runs to 643 residues: Arginine--tRNA ligase, mitochondrial (643 aa).

The 'HIGH' region signature appears at 188–198 (PNIAKPFHAGH).

Belongs to the class-I aminoacyl-tRNA synthetase family.

The protein resides in the mitochondrion matrix. The enzyme catalyses tRNA(Arg) + L-arginine + ATP = L-arginyl-tRNA(Arg) + AMP + diphosphate. The chain is Arginine--tRNA ligase, mitochondrial (MSR1) from Saccharomyces cerevisiae (strain ATCC 204508 / S288c) (Baker's yeast).